The chain runs to 339 residues: Anthranilate phosphoribosyltransferase (339 aa).

Residues Gly79, 82-83 (GD), Thr87, 89-92 (NIST), 107-115 (KHGNRAVSS), and Ser119 contribute to the 5-phospho-alpha-D-ribose 1-diphosphate site. Residue Gly79 participates in anthranilate binding. Mg(2+) is bound at residue Ser91. Asn110 contacts anthranilate. Residue Arg165 participates in anthranilate binding. Mg(2+) is bound by residues Asp224 and Glu225.

This sequence belongs to the anthranilate phosphoribosyltransferase family. Homodimer. It depends on Mg(2+) as a cofactor.

The catalysed reaction is N-(5-phospho-beta-D-ribosyl)anthranilate + diphosphate = 5-phospho-alpha-D-ribose 1-diphosphate + anthranilate. Its pathway is amino-acid biosynthesis; L-tryptophan biosynthesis; L-tryptophan from chorismate: step 2/5. Its function is as follows. Catalyzes the transfer of the phosphoribosyl group of 5-phosphorylribose-1-pyrophosphate (PRPP) to anthranilate to yield N-(5'-phosphoribosyl)-anthranilate (PRA). The sequence is that of Anthranilate phosphoribosyltransferase from Geobacillus sp. (strain WCH70).